The primary structure comprises 361 residues: Phosphoserine aminotransferase (361 aa).

Residues Ser-9 and Arg-42 each contribute to the L-glutamate site. Residues 76 to 77 (AR), Trp-102, Thr-153, Asp-173, and Gln-196 contribute to the pyridoxal 5'-phosphate site. Lys-197 is modified (N6-(pyridoxal phosphate)lysine). Pyridoxal 5'-phosphate is bound at residue 238 to 239 (NT).

This sequence belongs to the class-V pyridoxal-phosphate-dependent aminotransferase family. SerC subfamily. Homodimer. Requires pyridoxal 5'-phosphate as cofactor.

It is found in the cytoplasm. The catalysed reaction is O-phospho-L-serine + 2-oxoglutarate = 3-phosphooxypyruvate + L-glutamate. The enzyme catalyses 4-(phosphooxy)-L-threonine + 2-oxoglutarate = (R)-3-hydroxy-2-oxo-4-phosphooxybutanoate + L-glutamate. It participates in amino-acid biosynthesis; L-serine biosynthesis; L-serine from 3-phospho-D-glycerate: step 2/3. It functions in the pathway cofactor biosynthesis; pyridoxine 5'-phosphate biosynthesis; pyridoxine 5'-phosphate from D-erythrose 4-phosphate: step 3/5. In terms of biological role, catalyzes the reversible conversion of 3-phosphohydroxypyruvate to phosphoserine and of 3-hydroxy-2-oxo-4-phosphonooxybutanoate to phosphohydroxythreonine. In Serratia proteamaculans (strain 568), this protein is Phosphoserine aminotransferase.